The sequence spans 560 residues: MEFRQEEFRKLAGRALGKLHRLLEKRQEGAETLELSADGRPVTTQTRDPPVVDCTCFGLPRRYIIAIMSGLGFCISFGIRCNLGVAIVSMVNNSTTHRGGHVVMQKAQFNWDPETVGLIHGSFFWGYIVTQIPGGFICQKFAANRVFGFAIVATSTLNMLIPSAARVHYGCVIFVRILQGLVEGVTYPACHGIWSKWAPPLERSRLATTAFCGSYAGAVVAMPLAGVLVQYSGWSSVFYVYGSFGIFWYLFWLLVSYESPALHPSISEEERKYIEDAIGESAKLMNPVTKFNTPWRRFFTSMPVYAIIVANFCRSWTFYLLLISQPAYFEEVFGFEISKVGLVSALPHLVMTIIVPIGGQIADFLRSRRIMSTTNVRKLMNCGGFGMEATLLLVVGYSHSKGVAISFLVLAVGFSGFAISGFNVNHLDIAPRYASILMGISNGVGTLSGMVCPIIVGAMTKHKTREEWQYVFLIASLVHYGGVIFYGVFASGEKQPWAEPEEMSEEKCGFVGHDQLAGSDESEMEDEAEPPGAPPAPPPSYGATHSTVQPPRPPPPVRDY.

Topologically, residues 1 to 63 are cytoplasmic; the sequence is MEFRQEEFRK…CTCFGLPRRY (63 aa). A helical transmembrane segment spans residues 64-84; the sequence is IIAIMSGLGFCISFGIRCNLG. The Extracellular portion of the chain corresponds to 85 to 116; the sequence is VAIVSMVNNSTTHRGGHVVMQKAQFNWDPETV. A helical membrane pass occupies residues 117–137; it reads GLIHGSFFWGYIVTQIPGGFI. Residues 138–140 lie on the Cytoplasmic side of the membrane; it reads CQK. A helical transmembrane segment spans residues 141-161; the sequence is FAANRVFGFAIVATSTLNMLI. The Extracellular segment spans residues 162 to 169; that stretch reads PSAARVHY. A helical transmembrane segment spans residues 170-190; it reads GCVIFVRILQGLVEGVTYPAC. The Cytoplasmic segment spans residues 191 to 208; sequence HGIWSKWAPPLERSRLAT. Residues 209–229 form a helical membrane-spanning segment; it reads TAFCGSYAGAVVAMPLAGVLV. Topologically, residues 230–236 are extracellular; the sequence is QYSGWSS. A helical transmembrane segment spans residues 237–257; that stretch reads VFYVYGSFGIFWYLFWLLVSY. Residues 258 to 302 lie on the Cytoplasmic side of the membrane; sequence ESPALHPSISEEERKYIEDAIGESAKLMNPVTKFNTPWRRFFTSM. Residues 303-323 form a helical membrane-spanning segment; sequence PVYAIIVANFCRSWTFYLLLI. Residues 324 to 341 lie on the Extracellular side of the membrane; it reads SQPAYFEEVFGFEISKVG. The helical transmembrane segment at 342 to 362 threads the bilayer; it reads LVSALPHLVMTIIVPIGGQIA. The Cytoplasmic portion of the chain corresponds to 363–378; the sequence is DFLRSRRIMSTTNVRK. The chain crosses the membrane as a helical span at residues 379–399; the sequence is LMNCGGFGMEATLLLVVGYSH. Residues 400 to 401 lie on the Extracellular side of the membrane; the sequence is SK. Residues 402-422 traverse the membrane as a helical segment; sequence GVAISFLVLAVGFSGFAISGF. The Cytoplasmic portion of the chain corresponds to 423–435; that stretch reads NVNHLDIAPRYAS. A helical transmembrane segment spans residues 436 to 456; it reads ILMGISNGVGTLSGMVCPIIV. The Extracellular segment spans residues 457 to 469; that stretch reads GAMTKHKTREEWQ. The chain crosses the membrane as a helical span at residues 470–490; it reads YVFLIASLVHYGGVIFYGVFA. At 491-560 the chain is on the cytoplasmic side; sequence SGEKQPWAEP…PRPPPPVRDY (70 aa). The disordered stretch occupies residues 497–560; it reads WAEPEEMSEE…PRPPPPVRDY (64 aa). Residue Ser504 is modified to Phosphoserine. Acidic residues predominate over residues 520 to 529; sequence DESEMEDEAE. Pro residues-rich tracts occupy residues 531–540 and 550–560; these read PGAPPAPPPS and PPRPPPPVRDY.

Belongs to the major facilitator superfamily. Sodium/anion cotransporter family. VGLUT subfamily. As to quaternary structure, interacts with SHANK3.

It is found in the cytoplasmic vesicle. Its subcellular location is the secretory vesicle. The protein resides in the synaptic vesicle membrane. The protein localises to the cell membrane. It localises to the synapse. It is found in the synaptosome. The catalysed reaction is L-glutamate(out) = L-glutamate(in). It carries out the reaction chloride(in) = chloride(out). The enzyme catalyses 3 Na(+)(out) + phosphate(out) = 3 Na(+)(in) + phosphate(in). It catalyses the reaction phosphate(in) = phosphate(out). The catalysed reaction is K(+)(in) + H(+)(out) = K(+)(out) + H(+)(in). Chloride channel activity is allosterically activated by lumenal H(+) and Cl(-) leading to synaptic vesicles acidification. The L-glutamate transport activity is allosterically activated by lumenal H(+) and Cl(-). The allosteric activation by H(+) efficiently prevents non-vesicular efflux across the plasma membrane, thereby restricting L-glutamate transport activity to acidic membranes such as synaptic vesicles. Its function is as follows. Multifunctional transporter that transports L-glutamate as well as multiple ions such as chloride, proton, potassium, sodium and phosphate. At the synaptic vesicle membrane, mainly functions as an uniporter which transports preferentially L-glutamate but also phosphate from the cytoplasm into synaptic vesicles at presynaptic nerve terminals of excitatory neural cells. The L-glutamate or phosphate uniporter activity is electrogenic and is driven by the proton electrochemical gradient, mainly by the electrical gradient established by the vacuolar H(+)-ATPase across the synaptic vesicle membrane. In addition, functions as a chloride channel that allows a chloride permeation through the synaptic vesicle membrane that affects the proton electrochemical gradient and promotes synaptic vesicles acidification. Moreover, may function as a K(+)/H(+) antiport allowing to maintain the electrical gradient and to decrease chemical gradient and therefore sustain vesicular glutamate uptake. The vesicular K(+)/H(+) antiport activity is electroneutral. At the plasma membrane, following exocytosis, functions as a symporter of Na(+) and phosphate from the extracellular space to the cytoplasm allowing synaptic phosphate homeostasis regulation. The symporter activity is driven by an inside negative membrane potential and is electrogenic. Is necessary for synaptic signaling of visual-evoked responses from photoreceptors. This Bos taurus (Bovine) protein is Vesicular glutamate transporter 1.